Here is a 466-residue protein sequence, read N- to C-terminus: 3-isopropylmalate dehydratase large subunit (466 aa).

[4Fe-4S] cluster-binding residues include cysteine 347, cysteine 407, and cysteine 410.

The protein belongs to the aconitase/IPM isomerase family. LeuC type 1 subfamily. As to quaternary structure, heterodimer of LeuC and LeuD. [4Fe-4S] cluster is required as a cofactor.

The catalysed reaction is (2R,3S)-3-isopropylmalate = (2S)-2-isopropylmalate. It participates in amino-acid biosynthesis; L-leucine biosynthesis; L-leucine from 3-methyl-2-oxobutanoate: step 2/4. Functionally, catalyzes the isomerization between 2-isopropylmalate and 3-isopropylmalate, via the formation of 2-isopropylmaleate. The chain is 3-isopropylmalate dehydratase large subunit from Shewanella sediminis (strain HAW-EB3).